Here is a 1202-residue protein sequence, read N- to C-terminus: CHD3-type chromatin-remodeling factor CHR7 (1202 aa).

2 consecutive Chromo domains span residues 45 to 109 (GEIE…HPHL) and 142 to 201 (KTVD…RDKY). One can recognise a Helicase ATP-binding domain in the interval 237 to 405 (RYSWSKKTNV…FALMHFLDAD (169 aa)). 250–257 (DEMGLGKT) is a binding site for ATP. The short motif at 356–359 (DEGH) is the DEAH box element. Residues 528–679 (LLDKMMVKLK…HLVVGKQHLC (152 aa)) enclose the Helicase C-terminal domain. The disordered stretch occupies residues 838–872 (TSDEEEEADEPEAARQRKPRTVTRPYRKRARDNSE). A compositionally biased stretch (basic residues) spans 853 to 867 (QRKPRTVTRPYRKRA).

Belongs to the SNF2/RAD54 helicase family.

Its subcellular location is the nucleus. Its function is as follows. Chromatin remodeling factor that represses the expression of embryonic trait genes upon and after seed germination and thus enables the developmental switch to post-germinative growth. This Arabidopsis thaliana (Mouse-ear cress) protein is CHD3-type chromatin-remodeling factor CHR7.